A 342-amino-acid chain; its full sequence is Trans-3-hydroxy-L-proline dehydratase (342 aa).

Serine 90 (proton acceptor) is an active-site residue. Residues 91–92, aspartate 252, and 257–258 contribute to the substrate site; these read GS and GT.

It belongs to the proline racemase family.

It catalyses the reaction trans-3-hydroxy-L-proline = 1-pyrroline-2-carboxylate + H2O. It carries out the reaction trans-4-hydroxy-L-proline = cis-4-hydroxy-D-proline. In terms of biological role, catalyzes the dehydration of trans-3-hydroxy-L-proline (t3LHyp) to Delta(1)-pyrroline-2-carboxylate (Pyr2C). Can also catalyze the epimerization of trans-4-hydroxy-L-proline (t4LHyp) to cis-4-hydroxy-D-proline (c4DHyp), albeit with 30-fold lower efficiency. Is likely involved in both degradation pathways that convert t3LHyp to L-proline and t4LHyp to alpha-ketoglutarate, which would allow A.tumefaciens to grow on t3LHyp or t4LHyp as a sole carbon source. Displays no proline racemase activity. The chain is Trans-3-hydroxy-L-proline dehydratase from Agrobacterium fabrum (strain C58 / ATCC 33970) (Agrobacterium tumefaciens (strain C58)).